A 223-amino-acid polypeptide reads, in one-letter code: Chalcone--flavanone isomerase 2 (223 aa).

Residues Thr41, Asn106, and Ser183 each contribute to the substrate site.

Belongs to the chalcone isomerase family.

It carries out the reaction a chalcone = a flavanone.. The protein operates within secondary metabolite biosynthesis; flavonoid biosynthesis. Functionally, catalyzes the intramolecular cyclization of bicyclic chalcones into tricyclic (S)-flavanones. Responsible for the isomerization of 4,2',4',6'-tetrahydroxychalcone (also termed chalcone) into naringenin. This Arabidopsis thaliana (Mouse-ear cress) protein is Chalcone--flavanone isomerase 2 (CHI2).